Here is a 556-residue protein sequence, read N- to C-terminus: 2-succinyl-5-enolpyruvyl-6-hydroxy-3-cyclohexene-1-carboxylate synthase (556 aa).

Belongs to the TPP enzyme family. MenD subfamily. As to quaternary structure, homodimer. It depends on Mg(2+) as a cofactor. Requires Mn(2+) as cofactor. Thiamine diphosphate is required as a cofactor.

The catalysed reaction is isochorismate + 2-oxoglutarate + H(+) = 5-enolpyruvoyl-6-hydroxy-2-succinyl-cyclohex-3-ene-1-carboxylate + CO2. It participates in quinol/quinone metabolism; 1,4-dihydroxy-2-naphthoate biosynthesis; 1,4-dihydroxy-2-naphthoate from chorismate: step 2/7. The protein operates within quinol/quinone metabolism; menaquinone biosynthesis. In terms of biological role, catalyzes the thiamine diphosphate-dependent decarboxylation of 2-oxoglutarate and the subsequent addition of the resulting succinic semialdehyde-thiamine pyrophosphate anion to isochorismate to yield 2-succinyl-5-enolpyruvyl-6-hydroxy-3-cyclohexene-1-carboxylate (SEPHCHC). The sequence is that of 2-succinyl-5-enolpyruvyl-6-hydroxy-3-cyclohexene-1-carboxylate synthase from Escherichia coli (strain 55989 / EAEC).